Consider the following 473-residue polypeptide: Protein translocase subunit SecA (473 aa).

Aspartate 127 is a binding site for ATP. Positions 424 to 447 (VAEGKAVHQDTSKQEPKKKQPIRK) are disordered. Positions 457, 459, 468, and 469 each coordinate Zn(2+).

It belongs to the SecA family. Monomer and homodimer. Part of the essential Sec protein translocation apparatus which comprises SecA, SecYEG and auxiliary proteins SecDF. Other proteins may also be involved. Requires Zn(2+) as cofactor.

Its subcellular location is the cell membrane. The protein localises to the cytoplasm. It catalyses the reaction ATP + H2O + cellular proteinSide 1 = ADP + phosphate + cellular proteinSide 2.. Its function is as follows. Part of the Sec protein translocase complex. Interacts with the SecYEG preprotein conducting channel. Has a central role in coupling the hydrolysis of ATP to the transfer of proteins into and across the cell membrane, serving as an ATP-driven molecular motor driving the stepwise translocation of polypeptide chains across the membrane. This is Protein translocase subunit SecA from Cytobacillus firmus (Bacillus firmus).